Here is a 254-residue protein sequence, read N- to C-terminus: Major prion protein (254 aa).

A signal peptide spans 1-28 (MANLGYWLLALFVTTCTDVGLCKKRPKP). The segment at 23–38 (KKRPKPGGWNTGGSRY) is interaction with ADGRG6. Positions 23 to 231 (KKRPKPGGWN…SQAYYDGRRS (209 aa)) are interaction with GRB2, ERI3 and SYN1. The interval 24–107 (KRPKPGGWNT…QWNKPSKPKT (84 aa)) is disordered. 5 tandem repeats follow at residues 51-59 (PQSGGTWGQ), 60-67 (PHGGGWGQ), 68-75 (PHGGGWGQ), 76-83 (PHGGGWGQ), and 84-91 (PHGGGWSQ). The 5 X 8 AA tandem repeats of P-H-G-G-G-W-G-Q stretch occupies residues 51–91 (PQSGGTWGQPHGGGWGQPHGGGWGQPHGGGWGQPHGGGWSQ). The span at 55–95 (GTWGQPHGGGWGQPHGGGWGQPHGGGWGQPHGGGWSQGGGT) shows a compositional bias: gly residues. The Cu(2+) site is built by H61, G62, G63, H69, G70, G71, H77, G78, G79, H85, G86, and G87. A disulfide bridge links C179 with C214. Residues N181 and N197 are each glycosylated (N-linked (GlcNAc...) asparagine). S231 carries the GPI-anchor amidated serine lipid modification. A propeptide spans 232–254 (SAVLFSSPPVILLISFLIFLIVG) (removed in mature form).

Belongs to the prion family. Monomer and homodimer. Has a tendency to aggregate into amyloid fibrils containing a cross-beta spine, formed by a steric zipper of superposed beta-strands. Soluble oligomers may represent an intermediate stage on the path to fibril formation. Copper binding may promote oligomerization. Interacts with GRB2, APP, ERI3/PRNPIP and SYN1. Mislocalized cytosolically exposed PrP interacts with MGRN1; this interaction alters MGRN1 subcellular location and causes lysosomal enlargement. Interacts with APP. Interacts with KIAA1191. Interacts with ADGRG6.

It localises to the cell membrane. The protein resides in the golgi apparatus. Its function is as follows. Its primary physiological function is unclear. May play a role in neuronal development and synaptic plasticity. May be required for neuronal myelin sheath maintenance. May promote myelin homeostasis through acting as an agonist for ADGRG6 receptor. May play a role in iron uptake and iron homeostasis. Soluble oligomers are toxic to cultured neuroblastoma cells and induce apoptosis (in vitro). Association with GPC1 (via its heparan sulfate chains) targets PRNP to lipid rafts. Also provides Cu(2+) or Zn(2+) for the ascorbate-mediated GPC1 deaminase degradation of its heparan sulfate side chains. In Rattus norvegicus (Rat), this protein is Major prion protein (Prnp).